Reading from the N-terminus, the 349-residue chain is MDCMSLPRLILTLGDPAGIGPEVVLKALAEPGLASICQLTAIGSRSVLDQTRRQLLAQNPGLNLADPETINLLEVDLSYLGKITVGQGDAVSGAISFAYLNEAITRTLAGEFDAIVTAPIAKSAWQAAGHNYPGQTEVLAHRAGVESFAMAFVGRSPFTGWTLRTLLATTHIPLKEVPQALTPQLMTAKLELLLTCLAQDFGISNPSVAIAGLNPHSGEEGKLGSEEQDWLIPWLEQARKKYPQAQLIGPIPPDTMWVGPGKAWLTDGQTTVSDAYLALYHDQGLIPVKLLAFDQAINTTIGLPFVRTSPDHGTAFDIAGQGIARADSLIAAIKLAAELVEQRCRPRAQ.

Residue Thr-136 participates in substrate binding. A divalent metal cation contacts are provided by His-171, His-216, and His-281. The substrate site is built by Lys-289, Asn-298, and Arg-307.

It belongs to the PdxA family. In terms of assembly, homodimer. A divalent metal cation is required as a cofactor.

Its subcellular location is the cytoplasm. It catalyses the reaction 4-(phosphooxy)-L-threonine + NAD(+) = 3-amino-2-oxopropyl phosphate + CO2 + NADH. It functions in the pathway cofactor biosynthesis; pyridoxine 5'-phosphate biosynthesis; pyridoxine 5'-phosphate from D-erythrose 4-phosphate: step 4/5. Catalyzes the NAD(P)-dependent oxidation of 4-(phosphooxy)-L-threonine (HTP) into 2-amino-3-oxo-4-(phosphooxy)butyric acid which spontaneously decarboxylates to form 3-amino-2-oxopropyl phosphate (AHAP). The protein is 4-hydroxythreonine-4-phosphate dehydrogenase of Synechocystis sp. (strain ATCC 27184 / PCC 6803 / Kazusa).